A 987-amino-acid polypeptide reads, in one-letter code: Ephrin type-B receptor 4a (987 aa).

The signal sequence occupies residues 1–24 (MELFSRNVAAFWIILLEFLLGSVA). At 25–548 (EEEVLMNTKT…DSSSPLLVTG (524 aa)) the chain is on the extracellular side. The Eph LBD domain occupies 26–205 (EEVLMNTKTE…FFKKCPALTR (180 aa)). Disulfide bonds link C70–C187 and C104–C114. The tract at residues 319 to 340 (DSADTPCTRPPSSPRSPVPQVN) is disordered. Positions 326-335 (TRPPSSPRSP) are enriched in pro residues. Fibronectin type-III domains follow at residues 328–438 (PPSS…TSPN) and 442–536 (LVSG…TLPD). The helical transmembrane segment at 549 to 569 (ILIAMGMLLLIIVIGAAIYCI) threads the bilayer. Over 570–987 (RKQNNYKDPE…QNKAPGNVLY (418 aa)) the chain is Cytoplasmic. The region spanning 621 to 884 (VKIEEVIGAG…NIVSALDKLI (264 aa)) is the Protein kinase domain. Residues 627 to 635 (IGAGEFGEV) and K653 each bind ATP. D746 (proton acceptor) is an active-site residue. The SAM domain occupies 914 to 978 (SSCGTVGDWL…LSSIEALGIQ (65 aa)).

The protein belongs to the protein kinase superfamily. Tyr protein kinase family. Ephrin receptor subfamily.

The protein localises to the cell membrane. It catalyses the reaction L-tyrosyl-[protein] + ATP = O-phospho-L-tyrosyl-[protein] + ADP + H(+). Receptor tyrosine kinase which binds promiscuously transmembrane ephrin-B family ligands residing on adjacent cells, leading to contact-dependent bidirectional signaling into neighboring cells. The signaling pathway downstream of the receptor is referred to as forward signaling while the signaling pathway downstream of the ephrin ligand is referred to as reverse signaling. Together with its cognate ligand/functional ligand EFNB2 is involved in the regulation of cell adhesion and cell migration, and plays a central role in heart morphogenesis, angiogenesis and blood vessel remodeling and permeability. EPHB4-mediated forward signaling controls cellular repulsion and segregation from EFNB2-expressing cells. Involved in somitogenesis. The sequence is that of Ephrin type-B receptor 4a from Danio rerio (Zebrafish).